A 188-amino-acid polypeptide reads, in one-letter code: Peptidyl-tRNA hydrolase (188 aa).

Residue Phe-15 participates in tRNA binding. The Proton acceptor role is filled by His-20. TRNA is bound by residues Tyr-64, Asn-66, and Asn-112.

The protein belongs to the PTH family. In terms of assembly, monomer.

It is found in the cytoplasm. The enzyme catalyses an N-acyl-L-alpha-aminoacyl-tRNA + H2O = an N-acyl-L-amino acid + a tRNA + H(+). In terms of biological role, hydrolyzes ribosome-free peptidyl-tRNAs (with 1 or more amino acids incorporated), which drop off the ribosome during protein synthesis, or as a result of ribosome stalling. Functionally, catalyzes the release of premature peptidyl moieties from peptidyl-tRNA molecules trapped in stalled 50S ribosomal subunits, and thus maintains levels of free tRNAs and 50S ribosomes. The polypeptide is Peptidyl-tRNA hydrolase (Borreliella afzelii (strain PKo) (Borrelia afzelii)).